Here is a 211-residue protein sequence, read N- to C-terminus: MSEQSSSRYQQLQNEEEPGENPQASTDAPPPYSSIAGESSGLFDYKDELGFPKPPSYNVATSLPSYDEAERTKAEATIPLVPGRDDDFVARDDFDDADQLRIGNDGIFMLTFFMAFLFNWIGFFLSFCLTSSAAGRYGAISGFGLSLIKWILIVRFSTYFPGYFDGQYWLWWVFLVLGFLLFLRGFINYAKVRKMPDNFSTLPRTRVLFIY.

The span at 1 to 13 (MSEQSSSRYQQLQ) shows a compositional bias: polar residues. The tract at residues 1–48 (MSEQSSSRYQQLQNEEEPGENPQASTDAPPPYSSIAGESSGLFDYKDE) is disordered. Topologically, residues 1-106 (MSEQSSSRYQ…ADQLRIGNDG (106 aa)) are cytoplasmic. 2 short sequence motifs (PPxY motif) span residues 29 to 32 (PPPY) and 54 to 57 (PPSY). A helical transmembrane segment spans residues 107–127 (IFMLTFFMAFLFNWIGFFLSF). The Extracellular portion of the chain corresponds to 128–133 (CLTSSA). Residues 134 to 154 (AGRYGAISGFGLSLIKWILIV) form a helical membrane-spanning segment. The Cytoplasmic segment spans residues 155–162 (RFSTYFPG). The helical transmembrane segment at 163 to 183 (YFDGQYWLWWVFLVLGFLLFL) threads the bilayer. Topologically, residues 184–211 (RGFINYAKVRKMPDNFSTLPRTRVLFIY) are extracellular.

Its subcellular location is the golgi apparatus membrane. May play a role in Golgi structure maintenance. The chain is NEDD4 family-interacting protein 1 (ndfip1) from Xenopus tropicalis (Western clawed frog).